We begin with the raw amino-acid sequence, 593 residues long: UvrABC system protein C (593 aa).

The GIY-YIG domain occupies 14-91; it reads DSPGCYLHKD…IQENMPKYNI (78 aa). A UVR domain is found at 196–231; the sequence is NKIVNGLTEKMKSAAMTMEFERAAEYRDLIEAISLL.

Belongs to the UvrC family. In terms of assembly, interacts with UvrB in an incision complex.

It is found in the cytoplasm. The UvrABC repair system catalyzes the recognition and processing of DNA lesions. UvrC both incises the 5' and 3' sides of the lesion. The N-terminal half is responsible for the 3' incision and the C-terminal half is responsible for the 5' incision. This Streptococcus agalactiae serotype V (strain ATCC BAA-611 / 2603 V/R) protein is UvrABC system protein C.